The sequence spans 220 residues: Uracil-DNA glycosylase (220 aa).

Asp60 serves as the catalytic Proton acceptor.

Belongs to the uracil-DNA glycosylase (UDG) superfamily. UNG family.

The protein resides in the cytoplasm. The enzyme catalyses Hydrolyzes single-stranded DNA or mismatched double-stranded DNA and polynucleotides, releasing free uracil.. In terms of biological role, excises uracil residues from the DNA which can arise as a result of misincorporation of dUMP residues by DNA polymerase or due to deamination of cytosine. This Francisella tularensis subsp. tularensis (strain FSC 198) protein is Uracil-DNA glycosylase.